The following is a 212-amino-acid chain: Adenylate kinase (212 aa).

Residue 10–15 coordinates ATP; the sequence is GAGKGT. The tract at residues 30 to 59 is NMP; it reads STGDMFRAAMANQTEMGVLAKSYIDKGELV. AMP contacts are provided by residues T31, R36, 57–59, 86–89, and Q93; these read ELV and GYPR. The tract at residues 127–159 is LID; it reads GRIIHRQTGETFHKVFNPPANYNEEDYYQREDD. ATP-binding positions include R128 and 137–138; that span reads TF. 2 residues coordinate AMP: R156 and R167. Position 195 (Q195) interacts with ATP.

The protein belongs to the adenylate kinase family. Monomer.

It is found in the cytoplasm. It carries out the reaction AMP + ATP = 2 ADP. It functions in the pathway purine metabolism; AMP biosynthesis via salvage pathway; AMP from ADP: step 1/1. Its function is as follows. Catalyzes the reversible transfer of the terminal phosphate group between ATP and AMP. Plays an important role in cellular energy homeostasis and in adenine nucleotide metabolism. This Streptococcus gordonii (strain Challis / ATCC 35105 / BCRC 15272 / CH1 / DL1 / V288) protein is Adenylate kinase.